We begin with the raw amino-acid sequence, 410 residues long: MGEKPGTRVFKKSSPNCKLTVYLGKRDFVDHLDKVDPVDGVVLVDPDYLKDRKVFVTLTCAFRYGREDLDVLGLSFRKDLFIATYQAFPPMPNPPRPPTRLQDRLLKKLGQHAHPFFFTIPQNLPCSVTLQPGPEDTGKACGVDFEIRAFCAKSIEEKSHKRNSVRLIIRKVQFAPETPGPQPSAETTRHFLMSDRRSLHLEASLDKELYYHGEPLNVNVHVTNNSAKTVKKIRVSVRQYADICLFSTAQYKCPVAQLEQDDQVSPSSTFCKVYTITPLLSDNREKRGLALDGQLKHEDTNLASSTIVKEGANKEVLGILVSYRVKVKLVVSRGGDVSVELPFVLMHPKPHDHITLPRPQSAPRETDVPVDTNLIEFDTNYATDDDIVFEDFARLRLKGMKDDDCDDQFC.

Tyrosine 48 is modified (phosphotyrosine). Proline 176 and proline 181 each carry hydroxyproline; by PHD2. The interaction with TRAF6 stretch occupies residues 241-410; it reads ADICLFSTAQ…KDDDCDDQFC (170 aa). Position 361 is a phosphoserine (serine 361). The segment at 364 to 410 is interaction with AP2B1; that stretch reads RETDVPVDTNLIEFDTNYATDDDIVFEDFARLRLKGMKDDDCDDQFC. Threonine 383 is subject to Phosphothreonine. The [DE]-X(1,2)-F-X-X-[FL]-X-X-X-R motif signature appears at 386–396; it reads DIVFEDFARLR.

It belongs to the arrestin family. Homooligomer; the self-association is mediated by InsP6-binding. Heterooligomer with ARRB1; the association is mediated by InsP6-binding. Interacts with ADRB2 and CHRM2. Interacts with PDE4A. Interacts with PDE4D. Interacts with MAPK10, MAPK1 and MAPK3. Interacts with DRD2. Interacts with FSHR. Interacts with CLTC. Interacts with HTR2C. Interacts with CCR5. Interacts with CXCR4. Interacts with SRC. Interacts with DUSP16; the interaction is interrupted by stimulation of AGTR1 and activation of MAPK10. Interacts with CHUK; the interaction is enhanced stimulation of ADRB2. Interacts with RELA. Interacts with MDM2; the interaction is enhanced by activation of GPCRs. Interacts with SLC9A5. Interacts with TRAF6. Interacts with IGF1R. Interacts with ENG. Interacts with ARRB2. Interacts with KIR2DL1, KIR2DL3 and KIR2DL4. Interacts with LDLR. Interacts with AP2B1. Interacts with C5AR1. Interacts with RAF1. Interacts with MAP2K1. Interacts with MAPK1. Interacts with MAPK10; the interaction enhances MAPK10 activation by MAP3K5. Interacts with MAP2K4; the interaction is enhanced by presence of MAP3K5 and MAPK10. Interacts with MAP3K5. Interacts with AKT1. Interacts with IKBKB and MAP3K14. Interacts with SMO (activated). Interacts with GSK3A and GSK3B. Interacts with CXCR4; the interaction is dependent on C-terminal phosphorylation of CXCR4 and allows activation of MAPK1 and MAPK3. Interacts with GPR143. Interacts with HCK and CXCR1 (phosphorylated). Associates with protein phosphatase 2A (PP2A). Interacts with ACKR3 and ACKR4. Interacts with ARRDC1; the interaction is direct. Interacts with GPR61, GPR62 and GPR135. Interacts (via NACHT and LRR domains) with NLRP3; this interaction is direct and inducible by omega-3 polyunsaturated fatty acids (PUFAs). Interacts with FFAR4 (via C-terminus); this interaction is stimulated by long-chain fatty acids (LCFAs). Interacts with GPR35. Interacts with GPR84. Interacts with TIGIT; this interaction inhibits the NF-kappa-B pathway. Interacts with TGFBR3. In terms of processing, phosphorylated at Thr-383 in the cytoplasm; probably dephosphorylated at the plasma membrane. The phosphorylation does not regulate internalization and recycling of ADRB2, interaction with clathrin or AP2B1. The ubiquitination status appears to regulate the formation and trafficking of beta-arrestin-GPCR complexes and signaling. Ubiquitination appears to occur GPCR-specific. Ubiquitinated by MDM2; the ubiquitination is required for rapid internalization of ADRB2. Deubiquitinated by USP33; the deubiquitination leads to a dissociation of the beta-arrestin-GPCR complex. Stimulation of a class A GPCR, such as ADRB2, induces transient ubiquitination and subsequently promotes association with USP33. Stimulation of a class B GPCR promotes a sustained ubiquitination. Deubiquitinated by USP20; allowing USP20 to deubiquitinate TRAF6 leading to inhibition of NF-kappa-B signaling. Post-translationally, hydroxylation by PHD2 modulates the rate of internalization by slowing down recruitment to the plasma membrane and inhibiting subsequent co-internalization with class A receptors. As to expression, predominantly localized in neuronal tissues and in the spleen.

Its subcellular location is the cytoplasm. The protein resides in the nucleus. It localises to the cell membrane. It is found in the membrane. The protein localises to the clathrin-coated pit. Its subcellular location is the cytoplasmic vesicle. In terms of biological role, functions in regulating agonist-mediated G-protein coupled receptor (GPCR) signaling by mediating both receptor desensitization and resensitization processes. During homologous desensitization, beta-arrestins bind to the GPRK-phosphorylated receptor and sterically preclude its coupling to the cognate G-protein; the binding appears to require additional receptor determinants exposed only in the active receptor conformation. The beta-arrestins target many receptors for internalization by acting as endocytic adapters (CLASPs, clathrin-associated sorting proteins) and recruiting the GPRCs to the adapter protein 2 complex 2 (AP-2) in clathrin-coated pits (CCPs). However, the extent of beta-arrestin involvement appears to vary significantly depending on the receptor, agonist and cell type. Internalized arrestin-receptor complexes traffic to intracellular endosomes, where they remain uncoupled from G-proteins. Two different modes of arrestin-mediated internalization occur. Class A receptors, like ADRB2, OPRM1, ENDRA, D1AR and ADRA1B dissociate from beta-arrestin at or near the plasma membrane and undergo rapid recycling. Class B receptors, like AVPR2, AGTR1, NTSR1, TRHR and TACR1 internalize as a complex with arrestin and traffic with it to endosomal vesicles, presumably as desensitized receptors, for extended periods of time. Receptor resensitization then requires that receptor-bound arrestin is removed so that the receptor can be dephosphorylated and returned to the plasma membrane. Mediates endocytosis of CCR7 following ligation of CCL19 but not CCL21. Involved in internalization of P2RY1, P2RY4, P2RY6 and P2RY11 and ATP-stimulated internalization of P2RY2. Involved in phosphorylation-dependent internalization of OPRD1 and subsequent recycling or degradation. Involved in ubiquitination of IGF1R. Beta-arrestins function as multivalent adapter proteins that can switch the GPCR from a G-protein signaling mode that transmits short-lived signals from the plasma membrane via small molecule second messengers and ion channels to a beta-arrestin signaling mode that transmits a distinct set of signals that are initiated as the receptor internalizes and transits the intracellular compartment. Acts as a signaling scaffold for MAPK pathways such as MAPK1/3 (ERK1/2) and MAPK10 (JNK3). ERK1/2 and JNK3 activated by the beta-arrestin scaffold are largely excluded from the nucleus and confined to cytoplasmic locations such as endocytic vesicles, also called beta-arrestin signalosomes. Acts as a signaling scaffold for the AKT1 pathway. GPCRs for which the beta-arrestin-mediated signaling relies on both ARRB1 and ARRB2 (codependent regulation) include ADRB2, F2RL1 and PTH1R. For some GPCRs the beta-arrestin-mediated signaling relies on either ARRB1 or ARRB2 and is inhibited by the other respective beta-arrestin form (reciprocal regulation). Increases ERK1/2 signaling in AGTR1- and AVPR2-mediated activation (reciprocal regulation). Involved in CCR7-mediated ERK1/2 signaling involving ligand CCL19. Is involved in type-1A angiotensin II receptor/AGTR1-mediated ERK activity. Is involved in type-1A angiotensin II receptor/AGTR1-mediated MAPK10 activity. Is involved in dopamine-stimulated AKT1 activity in the striatum by disrupting the association of AKT1 with its negative regulator PP2A. Involved in AGTR1-mediated chemotaxis. Appears to function as signaling scaffold involved in regulation of MIP-1-beta-stimulated CCR5-dependent chemotaxis. Involved in attenuation of NF-kappa-B-dependent transcription in response to GPCR or cytokine stimulation by interacting with and stabilizing CHUK. Suppresses UV-induced NF-kappa-B-dependent activation by interacting with CHUK. The function is promoted by stimulation of ADRB2 and dephosphorylation of ARRB2. Involved in IL8-mediated granule release in neutrophils. Involved in p53/TP53-mediated apoptosis by regulating MDM2 and reducing the MDM2-mediated degradation of p53/TP53. May serve as nuclear messenger for GPCRs. Upon stimulation of OR1D2, may be involved in regulation of gene expression during the early processes of fertilization. Also involved in regulation of receptors other than GPCRs. Involved in endocytosis of TGFBR2 and TGFBR3 and down-regulates TGF-beta signaling such as NF-kappa-B activation. Involved in endocytosis of low-density lipoprotein receptor/LDLR. Involved in endocytosis of smoothened homolog/Smo, which also requires GRK2. Involved in endocytosis of SLC9A5. Involved in endocytosis of ENG and subsequent TGF-beta-mediated ERK activation and migration of epithelial cells. Involved in Toll-like receptor and IL-1 receptor signaling through the interaction with TRAF6 which prevents TRAF6 autoubiquitination and oligomerization required for activation of NF-kappa-B and JUN. Involved in insulin resistance by acting as insulin-induced signaling scaffold for SRC, AKT1 and INSR. Involved in regulation of inhibitory signaling of natural killer cells by recruiting PTPN6 and PTPN11 to KIR2DL1. Involved in the internalization of the atypical chemokine receptor ACKR3. Acts as an adapter protein coupling FFAR4 receptor to specific downstream signaling pathways, as well as mediating receptor endocytosis. During the activation step of NLRP3 inflammasome, directly associates with NLRP3 leading to inhibition of pro-inflammatory cytokine release and inhibition of inflammation. The protein is Beta-arrestin-2 (Arrb2) of Mus musculus (Mouse).